A 318-amino-acid chain; its full sequence is UDP-N-acetylenolpyruvoylglucosamine reductase (318 aa).

An FAD-binding PCMH-type domain is found at 38–204 (IGGVCPVIVE…LGIEILLKEG (167 aa)). R182 is an active-site residue. Over residues 212 to 229 (SLKDKRDRRNSSQPENKK) the composition is skewed to basic and acidic residues. The tract at residues 212–232 (SLKDKRDRRNSSQPENKKSAG) is disordered. Catalysis depends on S233, which acts as the Proton donor. Residue E310 is part of the active site.

This sequence belongs to the MurB family. FAD serves as cofactor.

The protein resides in the cytoplasm. The catalysed reaction is UDP-N-acetyl-alpha-D-muramate + NADP(+) = UDP-N-acetyl-3-O-(1-carboxyvinyl)-alpha-D-glucosamine + NADPH + H(+). The protein operates within cell wall biogenesis; peptidoglycan biosynthesis. In terms of biological role, cell wall formation. This is UDP-N-acetylenolpyruvoylglucosamine reductase from Leptospira interrogans serogroup Icterohaemorrhagiae serovar copenhageni (strain Fiocruz L1-130).